Consider the following 163-residue polypeptide: Lipoprotein signal peptidase (163 aa).

4 helical membrane passes run valine 5 to leucine 25, isoleucine 37 to leucine 57, leucine 67 to serine 87, and leucine 91 to tyrosine 111. Residues aspartate 121 and aspartate 139 contribute to the active site. The helical transmembrane segment at tryptophan 132–tyrosine 152 threads the bilayer.

Belongs to the peptidase A8 family.

It localises to the cell inner membrane. The enzyme catalyses Release of signal peptides from bacterial membrane prolipoproteins. Hydrolyzes -Xaa-Yaa-Zaa-|-(S,diacylglyceryl)Cys-, in which Xaa is hydrophobic (preferably Leu), and Yaa (Ala or Ser) and Zaa (Gly or Ala) have small, neutral side chains.. The protein operates within protein modification; lipoprotein biosynthesis (signal peptide cleavage). This protein specifically catalyzes the removal of signal peptides from prolipoproteins. The polypeptide is Lipoprotein signal peptidase (Sulfurihydrogenibium sp. (strain YO3AOP1)).